Here is a 142-residue protein sequence, read N- to C-terminus: MALLSPLLSLSSVPPITSIAVSSSSFPIKLQNVSVALLPSFGQRLVAHGPVIAQKRGTVVAMVSAAAEETAGEDGDQSKVEEANISVQNLPLESKLQLKLEQKIKMKMAKKIRLRRNRLMRKRKLRKRGAWPPSKMKKLKNV.

Residues 1–62 constitute a chloroplast transit peptide; the sequence is MALLSPLLSL…AQKRGTVVAM (62 aa). Residues 123 to 142 are disordered; that stretch reads RKLRKRGAWPPSKMKKLKNV.

Belongs to the chloroplast-specific ribosomal protein cL37 family. In terms of assembly, component of the chloroplast large ribosomal subunit (LSU). Mature 70S chloroplast ribosomes of higher plants consist of a small (30S) and a large (50S) subunit. The 30S small subunit contains 1 molecule of ribosomal RNA (16S rRNA) and 24 different proteins. The 50S large subunit contains 3 rRNA molecules (23S, 5S and 4.5S rRNA) and 33 different proteins.

The protein resides in the plastid. Its subcellular location is the chloroplast. Its function is as follows. Component of the chloroplast ribosome (chloro-ribosome), a dedicated translation machinery responsible for the synthesis of chloroplast genome-encoded proteins, including proteins of the transcription and translation machinery and components of the photosynthetic apparatus. This chain is Large ribosomal subunit protein cL37 alpha (PSRP5), found in Spinacia oleracea (Spinach).